Consider the following 514-residue polypeptide: tRNA-2-methylthio-N(6)-dimethylallyladenosine synthase (514 aa).

A disordered region spans residues 1 to 21 (MNEEQRKASSVDVLAERDKKA). Residues 68–186 (RTFLIKTYGC…LPEILEEAYL (119 aa)) form the MTTase N-terminal domain. 6 residues coordinate [4Fe-4S] cluster: C77, C113, C147, C223, C227, and C230. A Radical SAM core domain is found at 209–440 (REGNIKAWVN…KKVGHYSQIA (232 aa)). Residues 442–505 (SKYEGQTVTV…QYSLNGSFVK (64 aa)) enclose the TRAM domain.

The protein belongs to the methylthiotransferase family. MiaB subfamily. In terms of assembly, monomer. [4Fe-4S] cluster is required as a cofactor.

It is found in the cytoplasm. It carries out the reaction N(6)-dimethylallyladenosine(37) in tRNA + (sulfur carrier)-SH + AH2 + 2 S-adenosyl-L-methionine = 2-methylsulfanyl-N(6)-dimethylallyladenosine(37) in tRNA + (sulfur carrier)-H + 5'-deoxyadenosine + L-methionine + A + S-adenosyl-L-homocysteine + 2 H(+). In terms of biological role, catalyzes the methylthiolation of N6-(dimethylallyl)adenosine (i(6)A), leading to the formation of 2-methylthio-N6-(dimethylallyl)adenosine (ms(2)i(6)A) at position 37 in tRNAs that read codons beginning with uridine. This Staphylococcus aureus (strain N315) protein is tRNA-2-methylthio-N(6)-dimethylallyladenosine synthase.